The primary structure comprises 329 residues: Glycerol-3-phosphate dehydrogenase [NAD(P)+] (329 aa).

NADPH-binding residues include tryptophan 15, histidine 35, and lysine 107. Lysine 107, glycine 135, and serine 137 together coordinate sn-glycerol 3-phosphate. Alanine 139 lines the NADPH pocket. Positions 190, 243, 253, 254, and 255 each coordinate sn-glycerol 3-phosphate. The active-site Proton acceptor is lysine 190. Arginine 254 is an NADPH binding site. NADPH-binding residues include leucine 276 and glutamate 278.

The protein belongs to the NAD-dependent glycerol-3-phosphate dehydrogenase family.

Its subcellular location is the cytoplasm. It carries out the reaction sn-glycerol 3-phosphate + NAD(+) = dihydroxyacetone phosphate + NADH + H(+). It catalyses the reaction sn-glycerol 3-phosphate + NADP(+) = dihydroxyacetone phosphate + NADPH + H(+). It participates in membrane lipid metabolism; glycerophospholipid metabolism. In terms of biological role, catalyzes the reduction of the glycolytic intermediate dihydroxyacetone phosphate (DHAP) to sn-glycerol 3-phosphate (G3P), the key precursor for phospholipid synthesis. In Rhodopseudomonas palustris (strain BisB5), this protein is Glycerol-3-phosphate dehydrogenase [NAD(P)+].